The following is a 195-amino-acid chain: Calcium channel flower (195 aa).

Transmembrane regions (helical) follow at residues 34–54 (LLGIVAAFFAILFGLWNVISI), 66–88 (IIQMVAGFVVMLLEAPCCFVCIE), and 117–137 (IFMCFGLASLFGSGLIFATGV).

The protein belongs to the calcium channel flower family. As to quaternary structure, homomultimer. Associates with the dally/ magu complex.

It localises to the cell membrane. Its subcellular location is the cytoplasmic vesicle. The protein localises to the secretory vesicle. The protein resides in the synaptic vesicle membrane. It is found in the presynaptic cell membrane. It localises to the endosome. Its activity is regulated as follows. Channel activity is inhibited by La(3+), which reduces Ca(2+) influx and thus inhibits it's function in promoting activity-dependent bulk endocytosis (ADBE) in response to high stimuli. In terms of biological role, transmembrane protein which mediates synaptic endocytosis, fitness-based cell culling, neuronal culling, morphogen gradient scaling, and calcium transport. Regulates synaptic endocytosis and hence couples exo- with endocytosis. Controls two major modes of synaptic vesicle (SV) endocytosis in the synaptic boutons of neuromuscular junctions (NMJs); Ca(2+) channel-independent Clathrin-mediated endocytosis (CME) in response to mild stimulation, and Ca(2+) channel-dependent activity-dependent bulk endocytosis (ADBE) in response to strong stimulation. Functions in ADBE and subsequent SV reformation from bulk endosomes by initiating Ca(2+) channel-dependent phosphatidylinositol 4,5-bisphosphate (PtdIns(4,5)P2) compartmentalization in synaptic boutons. There it acts at the periactive zone to provide the low Ca(2+) levels required to initiate Calcineurin activation and upregulate PtdIns(4,5)P2. Conversely PtdIns(4,5)P2 enhances fwe Ca(2+) channel-activity, establishing a positive feedback loop that induces PtdIns(4,5)P2 microdomain at the periactive zone. These microdomains trigger bulk membrane invagination (i.e. ADBE) by triggering actin polymerization while also promoting localization of fwe to bulk endosomes, thereby removing the ADBE trigger to reduce endocytosis and prevent excess membrane uptake. PtdIns(4,5)P2 then promotes SV reformation from the bulk endosomes, to coordinate ADBE and subsequent SV reformation. Different combinations of the flower isoforms at the cell membrane are also required for the identification and elimination of suboptimal or supernumerary cells during development, regeneration, and adulthood. Required for the recognition and elimination of unfit cells in the developing wing during cell competition. In the developing pupal retina, mediates the elimination of unwanted postmitotic neurons, including supernumerary photoreceptor neurons that form at the periphery of the retina and are contained within incomplete ommatidia units. Also required for efficient elimination and replacement of old neurons by newly generated neurons during regeneration in the adult brain following mechanical injury. Downstream of the flower fitness fingerprints, cells identified as unwanted or unfit are eliminated via apoptosis through the expression of ahuizotl (azot). However, the cells marked for elimination by the flower isoforms only undergo apoptosis if additional thresholds are met; (1) their neighboring fit/healthy cells express different levels of the fwe isoforms, and (2) the levels of the protective signal SPARC expressed by the loser or unwanted cells are unable to inhibit caspase activation. These additional thresholds for flower-mediated apoptosis, allows useful cells to recover from transient and limited stress before they are unnecessarily eliminated. Functions with dally and magu in a mechanism of scaling, which utilises apoptosis to ensure that the dpp morphogen gradient, which mediates organ growth, remains proportional to the size of the growing wing. In this mechanism, fwe represses dally- and Magu-dependent activity in expanding the gradient, and dally/Magu inhibits fwe-dependent apoptosis to keep cell death rate low. When the levels of these different proteins are optimally regulated the gradient correctly scales with organ growth but when this fails, fwe-mediated apoptosis is activated to trim the developing tissue to match the correct size of the gradient. This Drosophila ananassae (Fruit fly) protein is Calcium channel flower.